The following is a 793-amino-acid chain: Splicing factor 3A subunit 1 (793 aa).

The segment at 1–43 is disordered; sequence MPAGPVQAVPPPPPVPTEPKQPTEEEASSKEDSAPSKPVVGII. Residues 8–19 show a composition bias toward pro residues; that stretch reads AVPPPPPVPTEP. Lys20 participates in a covalent cross-link: Glycyl lysine isopeptide (Lys-Gly) (interchain with G-Cter in SUMO2). Positions 21–34 are enriched in basic and acidic residues; that stretch reads QPTEEEASSKEDSA. One copy of the SURP motif 1 repeat lies at 52 to 94; the sequence is IVDKTASFVARNGPEFEARIRQNEINNPKFNFLNPNDPYHAYY. Lys55 is modified (N6-acetyllysine). A Glycyl lysine isopeptide (Lys-Gly) (interchain with G-Cter in SUMO2) cross-link involves residue Lys131. The stretch at 166 to 208 is one SURP motif 2 repeat; the sequence is VVKLTAQFVARNGRQFLTQLMQKEQRNYQFDFLRPQHSLFNYF. The segment at 318–428 is disordered; the sequence is GESEEVEMEV…KIPASKMQEH (111 aa). Phosphoserine occurs at positions 320, 329, and 359. 2 stretches are compositionally biased toward acidic residues: residues 320-334 and 354-364; these read SEEV…EEDD and DMDEGSDDEEE. Residues 368-384 are compositionally biased toward pro residues; the sequence is VPPPPETPMPPPLPPTP. Positions 388–397 are enriched in basic and acidic residues; it reads IVRKDYDPKA. Ser413 carries the post-translational modification Phosphoserine. Lys424 participates in a covalent cross-link: Glycyl lysine isopeptide (Lys-Gly) (interchain with G-Cter in SUMO2). Ser451 is modified (phosphoserine). At Tyr456 the chain carries Phosphotyrosine. Residues 488–502 are compositionally biased toward basic and acidic residues; the sequence is IGEEEIQKPEEKVTW. Disordered regions lie at residues 488 to 518, 530 to 584, and 665 to 688; these read IGEE…AAQA, HKAK…TMPP, and APMP…LKTE. Lys499 is covalently cross-linked (Glycyl lysine isopeptide (Lys-Gly) (interchain with G-Cter in SUMO2)). The residue at position 508 (Ser508) is a Phosphoserine. Residues 509–518 are compositionally biased toward polar residues; that stretch reads MARTQQAAQA. Lys542 participates in a covalent cross-link: Glycyl lysine isopeptide (Lys-Gly) (interchain with G-Cter in SUMO2). Positions 665 to 675 are enriched in pro residues; that stretch reads APMPPVHPPPP. Positions 680–702 are required and sufficient for nuclear import; sequence PTSKKLKTEDSLMPEEEFLRRNK. A Glycyl lysine isopeptide (Lys-Gly) (interchain with G-Cter in SUMO2) cross-link involves residue Lys686. The Ubiquitin-like domain maps to 707 to 793; that stretch reads IKVQVPNMQD…ALKERGGRKK (87 aa). Position 759 is a phosphotyrosine (Tyr759).

In terms of assembly, component of the 17S U2 SnRNP complex, a ribonucleoprotein complex that contains small nuclear RNA (snRNA) U2 and a number of specific proteins. Part of the SF3A subcomplex of the 17S U2 SnRNP complex which is composed of three subunits; SF3A3/SAP61, SF3A2/SAP62 and SF3A1/SAP114. SF3A associates with the splicing factor SF3B and a 12S RNA unit to form the mature 17S U2 small nuclear ribonucleoprotein complex (17S U2 snRNP). SF3A1 functions as a scaffold that interacts directly with both SF3A2 and SF3A3. Identified in the spliceosome 'E' complex, a precursor of the spliceosome 'A' complex. Identified in the spliceosome 'A' and 'B' complexes. Identified in the spliceosome 'C' complex. Interacts with P2RX6; resulting in a reduction of the splicing activity. In terms of tissue distribution, ubiquitously expressed.

The protein resides in the nucleus. It is found in the nucleus speckle. In terms of biological role, component of the 17S U2 SnRNP complex of the spliceosome, a large ribonucleoprotein complex that removes introns from transcribed pre-mRNAs. The 17S U2 SnRNP complex (1) directly participates in early spliceosome assembly and (2) mediates recognition of the intron branch site during pre-mRNA splicing by promoting the selection of the pre-mRNA branch-site adenosine, the nucleophile for the first step of splicing. Within the 17S U2 SnRNP complex, SF3A1 is part of the SF3A subcomplex that contributes to the assembly of the 17S U2 snRNP, and the subsequent assembly of the pre-spliceosome 'E' complex and the pre-catalytic spliceosome 'A' complex. Involved in pre-mRNA splicing as a component of pre-catalytic spliceosome 'B' complexes. The polypeptide is Splicing factor 3A subunit 1 (SF3A1) (Homo sapiens (Human)).